The sequence spans 372 residues: Nucleosome assembly protein 1;1 (372 aa).

A coiled-coil region spans residues 26–80; it reads VNALKNKLQNLAGQRSDVLENLTPNVRKRVDALRDIQSQHDELEAKFREERAILE. Phosphoserine is present on Ser41. A Nuclear export signal motif is present at residues 47–62; it reads LTPNVRKRVDALRDIQ. The Nuclear localization signal motif lies at 223–228; that stretch reads KKKPKK. The disordered stretch occupies residues 299 to 372; the sequence is AMEAEDFEID…DERPPECKQQ (74 aa). The span at 300–337 shows a compositional bias: acidic residues; the sequence is MEAEDFEIDDDEEDDIDEDEDEEDEEDEEDDDDEDEEE. Basic and acidic residues predominate over residues 360–372; it reads GKQDERPPECKQQ. Cys369 bears the Cysteine methyl ester mark. A lipid anchor (S-farnesyl cysteine) is attached at Cys369. A propeptide spans 370 to 372 (removed in mature form); sequence KQQ.

It belongs to the nucleosome assembly protein (NAP) family. In terms of assembly, can form homomeric and heteromeric protein complexes with NAP1;2, NAP1;3 and NAP1;4. Binds histone H2A. Interacts with PP438/PNM1. Post-translationally, prenylation of the protein is required for its function during the cell proliferation phase of leaf development. As to expression, ubiquitous.

The protein resides in the nucleus. The protein localises to the cytoplasm. Functionally, may modulate chromatin structure by regulation of nucleosome assembly/disassembly. Contributes to the regulation of cell proliferation and cell expansion. May function in nucleotide excision repair (NER). Involved in somatic homologous recombination. In Arabidopsis thaliana (Mouse-ear cress), this protein is Nucleosome assembly protein 1;1 (NAP1;1).